The primary structure comprises 560 residues: Ribonuclease J 1 (560 aa).

6 residues coordinate Zn(2+): His-76, His-78, Asp-80, His-81, His-144, and Asp-166. Position 366–370 (366–370) interacts with substrate; it reads HTSGH. Position 392 (His-392) interacts with Zn(2+).

This sequence belongs to the metallo-beta-lactamase superfamily. RNA-metabolizing metallo-beta-lactamase-like family. Bacterial RNase J subfamily. Homodimer, may be a subunit of the RNA degradosome. Zn(2+) serves as cofactor.

Its subcellular location is the cytoplasm. Its function is as follows. An RNase that has 5'-3' exonuclease and possibly endonuclease activity. Involved in maturation of rRNA and in some organisms also mRNA maturation and/or decay. Has an overlapping but not completely redundant role with RNase J2 in the decay of mRNA. The chain is Ribonuclease J 1 from Streptococcus pyogenes serotype M3 (strain ATCC BAA-595 / MGAS315).